The chain runs to 1015 residues: DNA polymerase catalytic subunit (1015 aa).

The protein belongs to the DNA polymerase type-B family. In terms of assembly, forms a complex with the major DNA-binding protein BALF2, the DNA polymerase processivity factor BMRF1, and the alkaline exonuclease BGLF5. Interacts with the putative helicase-primase complex composed of BBLF4, BSLF1 and BBLF2/3 proteins; these interactions may coordinate leading and lagging strand DNA synthesis at the replication fork.

It is found in the host nucleus. The enzyme catalyses DNA(n) + a 2'-deoxyribonucleoside 5'-triphosphate = DNA(n+1) + diphosphate. In terms of biological role, replicates viral genomic DNA in the late phase of lytic infection, producing long concatemeric DNA. The replication complex is composed of six viral proteins: the DNA polymerase, processivity factor, primase, primase-associated factor, helicase, and ssDNA-binding protein. The protein is DNA polymerase catalytic subunit of Homo sapiens (Human).